A 257-amino-acid polypeptide reads, in one-letter code: Acyl-[acyl-carrier-protein]--UDP-N-acetylglucosamine O-acyltransferase (257 aa).

The protein belongs to the transferase hexapeptide repeat family. LpxA subfamily. Homotrimer.

It localises to the cytoplasm. The enzyme catalyses a (3R)-hydroxyacyl-[ACP] + UDP-N-acetyl-alpha-D-glucosamine = a UDP-3-O-[(3R)-3-hydroxyacyl]-N-acetyl-alpha-D-glucosamine + holo-[ACP]. It functions in the pathway glycolipid biosynthesis; lipid IV(A) biosynthesis; lipid IV(A) from (3R)-3-hydroxytetradecanoyl-[acyl-carrier-protein] and UDP-N-acetyl-alpha-D-glucosamine: step 1/6. Its function is as follows. Involved in the biosynthesis of lipid A, a phosphorylated glycolipid that anchors the lipopolysaccharide to the outer membrane of the cell. The chain is Acyl-[acyl-carrier-protein]--UDP-N-acetylglucosamine O-acyltransferase from Anaeromyxobacter sp. (strain Fw109-5).